A 138-amino-acid chain; its full sequence is Protein FAM136A (138 aa).

At Ala-2 the chain carries N-acetylalanine. Thr-124 and Thr-126 each carry phosphothreonine.

Belongs to the FAM136 family.

This Homo sapiens (Human) protein is Protein FAM136A (FAM136A).